The sequence spans 389 residues: Succinyl-diaminopimelate desuccinylase (389 aa).

His72 contacts Zn(2+). Asp74 is an active-site residue. Asp105 contributes to the Zn(2+) binding site. Glu144 serves as the catalytic Proton acceptor. Residues Glu145, Glu173, and His362 each contribute to the Zn(2+) site.

Belongs to the peptidase M20A family. DapE subfamily. As to quaternary structure, homodimer. Zn(2+) serves as cofactor. Requires Co(2+) as cofactor.

The catalysed reaction is N-succinyl-(2S,6S)-2,6-diaminopimelate + H2O = (2S,6S)-2,6-diaminopimelate + succinate. It functions in the pathway amino-acid biosynthesis; L-lysine biosynthesis via DAP pathway; LL-2,6-diaminopimelate from (S)-tetrahydrodipicolinate (succinylase route): step 3/3. Catalyzes the hydrolysis of N-succinyl-L,L-diaminopimelic acid (SDAP), forming succinate and LL-2,6-diaminopimelate (DAP), an intermediate involved in the bacterial biosynthesis of lysine and meso-diaminopimelic acid, an essential component of bacterial cell walls. The sequence is that of Succinyl-diaminopimelate desuccinylase from Nitrobacter hamburgensis (strain DSM 10229 / NCIMB 13809 / X14).